The primary structure comprises 104 residues: Complex III assembly factor LYRM7 (104 aa).

Serine 60 is subject to Phosphoserine.

The protein belongs to the complex I LYR family. Interacts with UQCRFS1.

It localises to the mitochondrion matrix. Functionally, assembly factor required for Rieske Fe-S protein UQCRFS1 incorporation into the cytochrome b-c1 (CIII) complex. Functions as a chaperone, binding to this subunit within the mitochondrial matrix and stabilizing it prior to its translocation and insertion into the late CIII dimeric intermediate within the mitochondrial inner membrane. This chain is Complex III assembly factor LYRM7 (LYRM7), found in Pongo abelii (Sumatran orangutan).